The chain runs to 201 residues: Thioredoxin reductase-like selenoprotein T (201 aa).

The first 26 residues, 1–26, serve as a signal peptide directing secretion; the sequence is MARSSGPLCLLLLGGLVAGILSGASA. A cross-link (cysteinyl-selenocysteine (Cys-Sec)) is located at residues 51–54; it reads CVSU. Selenocysteine 54 is a non-standard amino acid (selenocysteine). The chain crosses the membrane as a helical span at residues 96–116; the sequence is VFKLVLIGLIIAGKDPFAFFG.

This sequence belongs to the SelWTH family. Selenoprotein T subfamily. In terms of processing, may contain a selenide-sulfide bond between Cys-51 and Sec-54. This bond is speculated to serve as redox-active pair.

The protein resides in the endoplasmic reticulum membrane. The enzyme catalyses [thioredoxin]-dithiol + NADP(+) = [thioredoxin]-disulfide + NADPH + H(+). In terms of biological role, selenoprotein with thioredoxin reductase-like oxidoreductase activity. This is Thioredoxin reductase-like selenoprotein T (selenot) from Xenopus tropicalis (Western clawed frog).